The primary structure comprises 212 residues: Cyclin-dependent kinase inhibitor 3 (212 aa).

Positions methionine 1 to phenylalanine 12 are enriched in polar residues. Positions methionine 1 to isoleucine 20 are disordered. Residues methionine 1–leucine 34 form an interaction with CDK2 region. A Tyrosine-protein phosphatase domain is found at serine 33–serine 201. Cysteine 140 acts as the Phosphocysteine intermediate in catalysis.

The protein belongs to the protein-tyrosine phosphatase family. Interacts with cyclin-dependent kinases such as CDK1, CDK2 and CDK3. Does not interact with CDK4. Interacts (via C-terminus) with phosphorylated CDK2 (via C-terminal helix). Interacts with MS4A3 (via C-terminus); the interaction enhances CDKN3 enzymatic activity.

It is found in the cytoplasm. The protein localises to the perinuclear region. It carries out the reaction O-phospho-L-tyrosyl-[protein] + H2O = L-tyrosyl-[protein] + phosphate. It catalyses the reaction O-phospho-L-threonyl-[protein] + H2O = L-threonyl-[protein] + phosphate. The enzyme catalyses O-phospho-L-seryl-[protein] + H2O = L-seryl-[protein] + phosphate. In terms of biological role, may play a role in cell cycle regulation. Dual specificity CC phosphatase active toward substrates containing either phosphotyrosine or phosphoserine residues. Dephosphorylates CDK2 at 'Thr-160' in a cyclin-dependent manner. The sequence is that of Cyclin-dependent kinase inhibitor 3 from Homo sapiens (Human).